Reading from the N-terminus, the 92-residue chain is Integration host factor subunit beta (92 aa).

It belongs to the bacterial histone-like protein family. In terms of assembly, heterodimer of an alpha and a beta chain.

Its function is as follows. This protein is one of the two subunits of integration host factor, a specific DNA-binding protein that functions in genetic recombination as well as in transcriptional and translational control. This chain is Integration host factor subunit beta, found in Bartonella tribocorum (strain CIP 105476 / IBS 506).